Consider the following 452-residue polypeptide: Matrilin-3 (452 aa).

The first 24 residues, methionine 1 to glycine 24, serve as a signal peptide directing secretion. In terms of domain architecture, VWFA spans aspartate 54–phenylalanine 229. EGF-like domains are found at residues alanine 235 to serine 275, alanine 276 to serine 316, alanine 317 to serine 357, and alanine 358 to serine 398. Cystine bridges form between cysteine 239-cysteine 250, cysteine 246-cysteine 259, cysteine 261-cysteine 274, cysteine 280-cysteine 291, cysteine 287-cysteine 300, cysteine 302-cysteine 315, cysteine 321-cysteine 332, cysteine 328-cysteine 341, cysteine 343-cysteine 356, cysteine 362-cysteine 373, cysteine 369-cysteine 382, and cysteine 384-cysteine 397. The N-linked (GlcNAc...) asparagine glycan is linked to asparagine 295. The stretch at alanine 419–valine 451 forms a coiled coil.

Can form homooligomers (monomers, dimers, trimers and tetramers) and heterooligomers with matrilin-1. Expression is restricted to cartilaginous tissues.

The protein localises to the secreted. Functionally, major component of the extracellular matrix of cartilage and may play a role in the formation of extracellular filamentous networks. In Gallus gallus (Chicken), this protein is Matrilin-3 (MATN3).